We begin with the raw amino-acid sequence, 445 residues long: C4-dicarboxylate transport protein (445 aa).

Helical transmembrane passes span 24-44 (VLYI…WLSP), 62-82 (LIKM…IAHI), 105-125 (FALI…GLAA), 163-183 (GDIL…MALG), 201-221 (FGVI…AMAF), 237-257 (LVAL…GVIA), 322-342 (IYMT…LSFS), and 370-390 (AGTL…VFSI).

It belongs to the dicarboxylate/amino acid:cation symporter (DAACS) (TC 2.A.23) family.

It localises to the cell inner membrane. Responsible for the transport of dicarboxylates such as succinate, fumarate, and malate from the periplasm across the membrane. This chain is C4-dicarboxylate transport protein, found in Rhodopseudomonas palustris (strain HaA2).